The primary structure comprises 958 residues: Unconventional myosin-Ih (958 aa).

Residues 12–691 form the Myosin motor domain; that stretch reads GVQDFVLLDA…TLFATEDAFE (680 aa). Position 105 to 112 (105 to 112) interacts with ATP; sequence GESGAGKT. S365 is modified (phosphoserine). Residues 568–590 are actin-binding; the sequence is LSSLLEILISKEPSYIRCIKPNE. IQ domains follow at residues 694–716 and 717–746; these read KHQLVSRIQATYKGCLGRREYMK and KRQAATKLEAHWRGVLARKEIKRRRWAVQI. In terms of domain architecture, TH1 spans 773–955; sequence RKNYILNLRY…NGQLRVVSAG (183 aa).

Belongs to the TRAFAC class myosin-kinesin ATPase superfamily. Myosin family. In terms of tissue distribution, highly expressed in the central nervous system, including the forebrain, midbrain and lower medulla. In the lower medulla, it is broadly expressed throughout the reticular formation. It is expressed in the retrotrapezoid nucleus and the nucleus of the solitary tract, as well as motor neurons of the facial, vagal and ambiguus nuclei. Expressed in neonatal inner-ear organs.

Its function is as follows. Myosins are actin-based motor molecules with ATPase activity. Unconventional myosins serve in intracellular movements. Their highly divergent tails are presumed to bind to membranous compartments, which would be moved relative to actin filaments. In Mus musculus (Mouse), this protein is Unconventional myosin-Ih (Myo1h).